The chain runs to 210 residues: Calcium-activated potassium channel subunit beta-4 (210 aa).

Over 1 to 19 (MAKLRVAYEYTEAEDKSIR) the chain is Cytoplasmic. A helical membrane pass occupies residues 20–40 (LGLFLIISGVVSLFIFGFCWL). The Extracellular segment spans residues 41 to 167 (SPALQDLQAT…DVLLHRTHDE (127 aa)). N-linked (GlcNAc...) asparagine glycans are attached at residues asparagine 53 and asparagine 90. The chain crosses the membrane as a helical span at residues 168–188 (IVLLHCFLWPLVTFVVGVLIV). The Cytoplasmic portion of the chain corresponds to 189-210 (VLTICAKSLAVKAEAMKKRKFS).

This sequence belongs to the KCNMB (TC 8.A.14.1) family. KCNMB4 subfamily. As to quaternary structure, interacts with KCNMA1 tetramer. There are probably 4 molecules of KCMNB4 per KCNMA1 tetramer. Interacts with FMR1 (via N-terminus). In terms of processing, phosphorylated. Phosphorylation modulates its effect on KCNMA1 activation kinetics. Post-translationally, N-glycosylated. A highly glycosylated form is promoted by KCNMA1. Glycosylation, which is not required for the interaction with KCNMA1 and subcellular location, increases protection against charybdotoxin. In terms of tissue distribution, predominantly expressed in brain. In brain, it is expressed in the cerebellum, cerebral cortex, medulla, spinal cord, occipital pole, frontal lobe, temporal lobe, putamen, amygdala, caudate nucleus, corpus callosum, hippocampus, substantia nigra and thalamus. Weakly or not expressed in other tissues.

It localises to the membrane. Functionally, regulatory subunit of the calcium activated potassium KCNMA1 (maxiK) channel. Modulates the calcium sensitivity and gating kinetics of KCNMA1, thereby contributing to KCNMA1 channel diversity. Decreases the gating kinetics and calcium sensitivity of the KCNMA1 channel, but with fast deactivation kinetics. May decrease KCNMA1 channel openings at low calcium concentrations but increases channel openings at high calcium concentrations. Makes KCNMA1 channel resistant to 100 nM charybdotoxin (CTX) toxin concentrations. The chain is Calcium-activated potassium channel subunit beta-4 (KCNMB4) from Homo sapiens (Human).